Here is a 171-residue protein sequence, read N- to C-terminus: Regulatory protein RecX (171 aa).

It belongs to the RecX family.

It localises to the cytoplasm. Modulates RecA activity. This chain is Regulatory protein RecX, found in Mycobacterium leprae (strain Br4923).